A 363-amino-acid chain; its full sequence is Chorismate synthase (363 aa).

NADP(+)-binding residues include Arg-48 and Arg-54. Residues Arg-125 to Ser-127, Asn-237 to Ala-238, Gly-277, Lys-292 to Ser-296, and Arg-318 contribute to the FMN site.

Belongs to the chorismate synthase family. Homotetramer. FMNH2 is required as a cofactor.

It catalyses the reaction 5-O-(1-carboxyvinyl)-3-phosphoshikimate = chorismate + phosphate. It participates in metabolic intermediate biosynthesis; chorismate biosynthesis; chorismate from D-erythrose 4-phosphate and phosphoenolpyruvate: step 7/7. Its function is as follows. Catalyzes the anti-1,4-elimination of the C-3 phosphate and the C-6 proR hydrogen from 5-enolpyruvylshikimate-3-phosphate (EPSP) to yield chorismate, which is the branch point compound that serves as the starting substrate for the three terminal pathways of aromatic amino acid biosynthesis. This reaction introduces a second double bond into the aromatic ring system. This is Chorismate synthase from Pseudomonas putida (strain GB-1).